A 389-amino-acid polypeptide reads, in one-letter code: ATP phosphoribosyltransferase regulatory subunit (389 aa).

This sequence belongs to the class-II aminoacyl-tRNA synthetase family. HisZ subfamily. In terms of assembly, heteromultimer composed of HisG and HisZ subunits.

Its subcellular location is the cytoplasm. It participates in amino-acid biosynthesis; L-histidine biosynthesis; L-histidine from 5-phospho-alpha-D-ribose 1-diphosphate: step 1/9. Functionally, required for the first step of histidine biosynthesis. May allow the feedback regulation of ATP phosphoribosyltransferase activity by histidine. The protein is ATP phosphoribosyltransferase regulatory subunit of Moorella thermoacetica (strain ATCC 39073 / JCM 9320).